The sequence spans 463 residues: MTPVRMQHSLAGQTYAVPLIQPDLRREEAVQQMADALQYLQKVSGDIFSRISQQVEQSRSQVQAIGEKVSLAQAKIEKIKGSKKAIKVFSSAKYPAPERLQEYGSIFTGAQDPGLQRRPRHRIQSKHRPLDERALQEKDFPVCVSTKPEPEDDAEEGLGGLPSNISSVSSLLLFNTTENLGKKYVFLDPLAGAVTKTHVMLGAETEEKLFDAPLSISKREQLEQQVPENYFYVPDLGQVPEIDVPSYLPDLPGITNDLMYIADLGPGIAPSAPGTIPELPTFHTEVAEPLKVDLQDGVLTPPPPPPPPPPAPEVLASAPPLPPSTAAPVGQGARQDDSSSSASPSVQGAPREVVDPSGGRATLLESIRQAGGIGKAKLRSMKERKLEKKQQKEQEQVRATSQGGHLMSDLFNKLVMRRKGISGKGPGAGEGPGGAFARVSDSIPPLPPPQQPQAEEDEDDWES.

The tract at residues 1-54 is required for WASH complex assembly; the sequence is MTPVRMQHSLAGQTYAVPLIQPDLRREEAVQQMADALQYLQKVSGDIFSRISQQ. The interval 1 to 165 is WHD1; the sequence is MTPVRMQHSL…EGLGGLPSNI (165 aa). Lys218 is covalently cross-linked (Glycyl lysine isopeptide (Lys-Gly) (interchain with G-Cter in ubiquitin)). The interval 295-463 is disordered; the sequence is QDGVLTPPPP…AEEDEDDWES (169 aa). Pro residues predominate over residues 300–312; it reads TPPPPPPPPPPAP. The segment at 347–463 is VCA; it reads QGAPREVVDP…AEEDEDDWES (117 aa). The region spanning 359–381 is the WH2 domain; sequence GRATLLESIRQAGGIGKAKLRSM. Residues 380–396 show a composition bias toward basic and acidic residues; the sequence is SMKERKLEKKQQKEQEQ. Positions 422–434 are enriched in gly residues; the sequence is SGKGPGAGEGPGG. Residues 454-463 are compositionally biased toward acidic residues; sequence AEEDEDDWES.

Belongs to the WASH1 family. As to quaternary structure, component of the WASH core complex also described as WASH regulatory complex (SHRC) composed of WASH (WASHC1, WASH2P or WASH3P), WASHC2 (WASHC2A or WASHC2C), WASHC3, WASHC4 and WASHC5. The WASH core complex associates with the F-actin-capping protein dimer (formed by CAPZA1, CAPZA2 or CAPZA3 and CAPZB) in a transient or substoichiometric manner which was initially described as WASH complex. Interacts (via WHD1 region) with WASHC2C; the interaction is direct. Interacts with alpha-tubulin. Interacts with BECN1; WASHC1 and AMBRA1 can competitively interact with BECN1. Interacts with BLOC1S2; may associate with the BLOC-1 complex. Interacts with tubulin gamma chain (TUBG1 or TUBG2). Interacts with EXOC1, EXOC4, EXOC8; in MMP14-positive endosomes in breast tumor cells; indicative for an association with the exocyst complex.

It is found in the early endosome. The protein resides in the early endosome membrane. Its subcellular location is the recycling endosome membrane. It localises to the cell projection. The protein localises to the lamellipodium. It is found in the filopodium. The protein resides in the cytoplasmic vesicle. Its subcellular location is the autophagosome. It localises to the cytoplasm. The protein localises to the cytoskeleton. It is found in the microtubule organizing center. The protein resides in the centrosome. Its subcellular location is the centriole. Functionally, acts as a nucleation-promoting factor at the surface of endosomes, where it recruits and activates the Arp2/3 complex to induce actin polymerization, playing a key role in the fission of tubules that serve as transport intermediates during endosome sorting. Involved in endocytic trafficking of EGF. Involved in transferrin receptor recycling. Regulates the trafficking of endosomal alpha5beta1 integrin to the plasma membrane and involved in invasive cell migration. In T-cells involved in endosome-to-membrane recycling of receptors including T-cell receptor (TCR), CD28 and ITGAL; proposed to be implicated in T cell proliferation and effector function. In dendritic cells involved in endosome-to-membrane recycling of major histocompatibility complex (MHC) class II probably involving retromer and subsequently allowing antigen sampling, loading and presentation during T-cell activation. Involved in Arp2/3 complex-dependent actin assembly driving Salmonella typhimurium invasion independent of ruffling. Involved in the exocytosis of MMP14 leading to matrix remodeling during invasive migration and implicating late endosome-to-plasma membrane tubular connections and cooperation with the exocyst complex. Involved in negative regulation of autophagy independently from its role in endosomal sorting by inhibiting BECN1 ubiquitination to inactivate PIK3C3/Vps34 activity. This Homo sapiens (Human) protein is Putative WAS protein family homolog 3 (WASH3P).